A 450-amino-acid chain; its full sequence is Asparagine--tRNA ligase (450 aa).

Belongs to the class-II aminoacyl-tRNA synthetase family. Homodimer.

It is found in the cytoplasm. The catalysed reaction is tRNA(Asn) + L-asparagine + ATP = L-asparaginyl-tRNA(Asn) + AMP + diphosphate + H(+). This is Asparagine--tRNA ligase from Metamycoplasma arthritidis (strain 158L3-1) (Mycoplasma arthritidis).